Reading from the N-terminus, the 544-residue chain is CTP synthase (544 aa).

The amidoligase domain stretch occupies residues 1–267; the sequence is MAKFVFVTGG…CRQVLDVLSL (267 aa). CTP is bound at residue Ser-13. Ser-13 serves as a coordination point for UTP. ATP is bound by residues 14–19 and Asp-71; that span reads SIGKGI. Asp-71 and Glu-141 together coordinate Mg(2+). Residues 148–150, 188–193, and Lys-224 each bind CTP; these read DIE and KTKPTQ. UTP is bound by residues 188–193 and Lys-224; that span reads KTKPTQ. A Glutamine amidotransferase type-1 domain is found at 292 to 534; the sequence is KVALVGKYVQ…IQAASQRLPQ (243 aa). Gly-354 lines the L-glutamine pocket. Cys-381 functions as the Nucleophile; for glutamine hydrolysis in the catalytic mechanism. L-glutamine is bound by residues 382 to 385, Glu-405, and Arg-462; that span reads LGMQ. Catalysis depends on residues His-507 and Glu-509.

Belongs to the CTP synthase family. In terms of assembly, homotetramer.

It catalyses the reaction UTP + L-glutamine + ATP + H2O = CTP + L-glutamate + ADP + phosphate + 2 H(+). The enzyme catalyses L-glutamine + H2O = L-glutamate + NH4(+). It carries out the reaction UTP + NH4(+) + ATP = CTP + ADP + phosphate + 2 H(+). The protein operates within pyrimidine metabolism; CTP biosynthesis via de novo pathway; CTP from UDP: step 2/2. Allosterically activated by GTP, when glutamine is the substrate; GTP has no effect on the reaction when ammonia is the substrate. The allosteric effector GTP functions by stabilizing the protein conformation that binds the tetrahedral intermediate(s) formed during glutamine hydrolysis. Inhibited by the product CTP, via allosteric rather than competitive inhibition. Catalyzes the ATP-dependent amination of UTP to CTP with either L-glutamine or ammonia as the source of nitrogen. Regulates intracellular CTP levels through interactions with the four ribonucleotide triphosphates. The sequence is that of CTP synthase from Synechococcus sp. (strain RCC307).